The chain runs to 300 residues: Ribonuclease HIII (300 aa).

In terms of domain architecture, RNase H type-2 spans 83-300 (IPIIGSDEVG…THKAQALLTK (218 aa)). The a divalent metal cation site is built by aspartate 89, glutamate 90, and aspartate 194.

This sequence belongs to the RNase HII family. RnhC subfamily. It depends on Mn(2+) as a cofactor. Mg(2+) serves as cofactor.

The protein localises to the cytoplasm. It carries out the reaction Endonucleolytic cleavage to 5'-phosphomonoester.. Endonuclease that specifically degrades the RNA of RNA-DNA hybrids. This is Ribonuclease HIII from Streptococcus pyogenes serotype M49 (strain NZ131).